The primary structure comprises 144 residues: Large ribosomal subunit protein uL13 (144 aa).

The protein belongs to the universal ribosomal protein uL13 family. Part of the 50S ribosomal subunit.

Functionally, this protein is one of the early assembly proteins of the 50S ribosomal subunit, although it is not seen to bind rRNA by itself. It is important during the early stages of 50S assembly. In Lawsonia intracellularis (strain PHE/MN1-00), this protein is Large ribosomal subunit protein uL13.